A 154-amino-acid chain; its full sequence is 3-dehydroquinate dehydratase (154 aa).

Tyr23 functions as the Proton acceptor in the catalytic mechanism. Substrate-binding residues include Asn74, His80, and Asp87. The active-site Proton donor is His100. Substrate is bound by residues 101–102 (LS) and Arg111.

This sequence belongs to the type-II 3-dehydroquinase family. Homododecamer.

The catalysed reaction is 3-dehydroquinate = 3-dehydroshikimate + H2O. It functions in the pathway metabolic intermediate biosynthesis; chorismate biosynthesis; chorismate from D-erythrose 4-phosphate and phosphoenolpyruvate: step 3/7. Catalyzes a trans-dehydration via an enolate intermediate. This is 3-dehydroquinate dehydratase from Actinobacillus pleuropneumoniae serotype 5b (strain L20).